The sequence spans 286 residues: Carbohydrate-binding domain-containing protein Cthe_2159 (286 aa).

A signal peptide spans 1-20 (MSIKKLILAASILTTLALTG). Cys21 carries N-palmitoyl cysteine lipidation. Cys21 carries the S-diacylglycerol cysteine lipid modification. The segment at 124–225 (GKDNVLTDAE…GIKVENTEEP (102 aa)) is polygalacturonic acid-binding. Arg152, Asp153, Asp154, Asn177, Asp178, Asp215, Asp243, Asp244, and Asp247 together coordinate Ca(2+).

In terms of assembly, monomer.

It is found in the cell membrane. Functionally, binds cellulosic and pectic substrates. Displays no enzyme activity (in vitro). The protein is Carbohydrate-binding domain-containing protein Cthe_2159 of Acetivibrio thermocellus (strain ATCC 27405 / DSM 1237 / JCM 9322 / NBRC 103400 / NCIMB 10682 / NRRL B-4536 / VPI 7372) (Clostridium thermocellum).